Here is a 185-residue protein sequence, read N- to C-terminus: Photosystem I assembly protein Ycf4 (185 aa).

The next 2 helical transmembrane spans lie at 24 to 44 (YIIG…SISS) and 58 to 78 (ALLF…ANLL).

This sequence belongs to the Ycf4 family.

It localises to the cellular thylakoid membrane. In terms of biological role, seems to be required for the assembly of the photosystem I complex. The chain is Photosystem I assembly protein Ycf4 from Prochlorococcus marinus (strain MIT 9215).